The following is a 209-amino-acid chain: Large ribosomal subunit protein uL3 (209 aa).

Belongs to the universal ribosomal protein uL3 family. Part of the 50S ribosomal subunit. Forms a cluster with proteins L14 and L19.

Its function is as follows. One of the primary rRNA binding proteins, it binds directly near the 3'-end of the 23S rRNA, where it nucleates assembly of the 50S subunit. The chain is Large ribosomal subunit protein uL3 from Carboxydothermus hydrogenoformans (strain ATCC BAA-161 / DSM 6008 / Z-2901).